The chain runs to 427 residues: MACARPLISVYSEKGESSGKNVTLPAVFKAPIRPDIVNFVHTNLRKNNRQPYAVSELAGHQTSAESWGTGRAVARIPRVRGGGTHRSGQGAFGNMCRGGRMFAPTKTWRRWHRRVNTTQKRYAICSALAASALPALVMSKGHRIEEVPELPLVVEDKVEGYKKTKEAVLLLKKLKARNDIKKVYASQRMRAGKGKMRNRRRIQRRGPCIIYNEDNGIIKAFRNIPGITLLNVSKLNILKLAPGGHVGRFCIWTESAFRKLDELYGTWRKAASLKSNYNLPMHKMINTDLSRILKSPEIQRALRAPRKKIHRRVLKKNPLKNLRIMLKLNPYAKTMRRNTILRQARNHKLRVDKAAAAAAALQAKSDEKAAVAGKKPVVGKKGKKAAVGVKKQKKPLVGKKAAATKKPAPEKKPAEKKPTTEEKKPAA.

Ala-2 carries the N-acetylalanine modification. Lys-14 is subject to N6-acetyllysine. At Arg-97 the chain carries Omega-N-methylarginine. Lys-106 is subject to N6-acetyllysine. Lys-239 participates in a covalent cross-link: Glycyl lysine isopeptide (Lys-Gly) (interchain with G-Cter in SUMO2). Lys-259 carries the post-translational modification N6-acetyllysine. Thr-266 is modified (phosphothreonine). A phosphoserine mark is found at Ser-290 and Ser-295. Citrulline is present on Arg-300. A Glycyl lysine isopeptide (Lys-Gly) (interchain with G-Cter in SUMO2) cross-link involves residue Lys-327. Lys-333 and Lys-353 each carry N6-acetyllysine. Lys-364 carries the N6-acetyllysine; alternate modification. Lys-364 participates in a covalent cross-link: Glycyl lysine isopeptide (Lys-Gly) (interchain with G-Cter in SUMO1); alternate. Phosphoserine is present on Ser-365. The interval 369 to 427 (AAVAGKKPVVGKKGKKAAVGVKKQKKPLVGKKAAATKKPAPEKKPAEKKPTTEEKKPAA) is disordered. Residues 377 to 397 (VVGKKGKKAAVGVKKQKKPLV) show a composition bias toward basic residues. Over residues 407 to 427 (PAPEKKPAEKKPTTEEKKPAA) the composition is skewed to basic and acidic residues.

Belongs to the universal ribosomal protein uL4 family. As to quaternary structure, component of the large ribosomal subunit. May bind IPO9 with low affinity. Interacts with RBM3. In terms of processing, citrullinated by PADI4.

The protein resides in the cytoplasm. In terms of biological role, component of the large ribosomal subunit. The ribosome is a large ribonucleoprotein complex responsible for the synthesis of proteins in the cell. The sequence is that of Large ribosomal subunit protein uL4 (RPL4) from Pongo abelii (Sumatran orangutan).